Here is a 510-residue protein sequence, read N- to C-terminus: ATP synthase subunit alpha, mitochondrial (510 aa).

171-178 (GDRQTGKT) serves as a coordination point for ATP.

As to quaternary structure, F-type ATP synthases have 2 components, the catalytic core F(1) and the membrane-embedded component F(0), linked together by a central stalk and a peripheral stalk. The central stalk, also called rotor shaft, is often seen as part of F(1). The peripheral stalk is seen as part of F(0). F(0) contains the membrane channel next to the rotor. F-type ATP synthases form dimers but each monomer functions independently in ATP generation. The dimer consists of 18 different polypeptides: ATP1 (subunit alpha, part of F(1), 3 molecules per monomer), ATP2 (subunit beta, part of F(1), 3 molecules per monomer), ATP3 (subunit gamma, part of the central stalk), ATP4 (subunit b, part of the peripheral stalk), ATP5/OSCP (subunit 5/OSCP, part of the peripheral stalk), ATP6 (subunit a, part of the peripheral stalk), ATP7 (subunit d, part of the peripheral stalk), ATP8 (subunit 8, part of the peripheral stalk), OLI1 (subunit c, part of the rotor, 10 molecules per monomer), ATP14 (subunit h, part of the peripheral stalk), ATP15 (subunit epsilon, part of the central stalk), ATP16 (subunit delta, part of the central stalk), ATP17 (subunit f, part of the peripheral stalk), ATP18 (subunit i/j, part of the peripheral stalk). Dimer-specific subunits are ATP19 (subunit k, at interface between monomers), ATP20 (subunit g, at interface between monomers), TIM11 (subunit e, at interface between monomers). Also contains subunit L.

Its subcellular location is the mitochondrion inner membrane. Its function is as follows. Mitochondrial membrane ATP synthase (F(1)F(0) ATP synthase or Complex V) produces ATP from ADP in the presence of a proton gradient across the membrane which is generated by electron transport complexes of the respiratory chain. F-type ATP synthases consist of two structural domains, F(1) - containing the extramembraneous catalytic core, and F(0) - containing the membrane proton channel, linked together by a central stalk and a peripheral stalk. During catalysis, ATP synthesis in the catalytic domain of F(1) is coupled via a rotary mechanism of the central stalk subunits to proton translocation. Subunits alpha/ATP1 and beta/ATP2 form the catalytic core in F(1). Rotation of the central stalk against the surrounding alpha/ATP1(3)beta/ATP2(3) subunits leads to hydrolysis of ATP in three separate catalytic sites on the beta/ATP2 subunits. Subunit alpha/ATP1 does not bear the catalytic high-affinity ATP-binding sites. This chain is ATP synthase subunit alpha, mitochondrial, found in Pichia angusta (Yeast).